The sequence spans 171 residues: uncharacterized protein (171 aa).

Disordered stretches follow at residues 27–53 and 82–108; these read DCPG…KMVL and GHLE…PSSS. Positions 32 to 50 are enriched in polar residues; that stretch reads GNNNREPSISTRGRTSSSK.

This is an uncharacterized protein from Homo sapiens (Human).